We begin with the raw amino-acid sequence, 207 residues long: Superoxide dismutase [Mn] (207 aa).

Mn(2+) is bound by residues H28, H76, D160, and H164.

It belongs to the iron/manganese superoxide dismutase family. The cofactor is Mn(2+).

It is found in the secreted. The enzyme catalyses 2 superoxide + 2 H(+) = H2O2 + O2. In terms of biological role, destroys superoxide anion radicals which are normally produced within the cells and which are toxic to biological systems. In Mycolicibacterium paratuberculosis (strain ATCC BAA-968 / K-10) (Mycobacterium paratuberculosis), this protein is Superoxide dismutase [Mn] (sodA).